A 154-amino-acid polypeptide reads, in one-letter code: MRKKKTEVYALRRHISLSADKARRVIDQIRGRSYEETLMILELMPYRACSPISKLVYSAAANANSNMGSNKANLVISNAEVNEGTTRKKFKPRARGHCYPIKRRTCHITIGVKDISLDDEYEQIYSLKKPRWKNKYTTMIYHDIDSIGRVWDKK.

The protein belongs to the universal ribosomal protein uL22 family. Part of the 50S ribosomal subunit.

The protein localises to the plastid. It localises to the chloroplast. Its function is as follows. This protein binds specifically to 23S rRNA. In terms of biological role, the globular domain of the protein is located near the polypeptide exit tunnel on the outside of the subunit, while an extended beta-hairpin is found that lines the wall of the exit tunnel in the center of the 70S ribosome. This is Large ribosomal subunit protein uL22c (rpl22) from Jasminum nudiflorum (Winter jasmine).